A 100-amino-acid chain; its full sequence is Small ribosomal subunit protein uS14c (100 aa).

It belongs to the universal ribosomal protein uS14 family. Part of the 30S ribosomal subunit.

It is found in the plastid. Its subcellular location is the chloroplast. Binds 16S rRNA, required for the assembly of 30S particles. This is Small ribosomal subunit protein uS14c from Porphyra purpurea (Red seaweed).